The primary structure comprises 163 residues: Protein MATERNALLY EXPRESSED GENE 5 (163 aa).

An RRM domain is found at 38–117; sequence STLYIEGLPA…DDVNVSAPAE (80 aa). Disulfide bonds link cysteine 140–cysteine 162 and cysteine 143–cysteine 151.

Belongs to the MEG family. In terms of tissue distribution, ubiquitous.

The sequence is that of Protein MATERNALLY EXPRESSED GENE 5 (MEG5) from Zea mays (Maize).